Consider the following 569-residue polypeptide: Sulfite reductase [NADPH] hemoprotein beta-component (569 aa).

[4Fe-4S] cluster contacts are provided by cysteine 434, cysteine 440, cysteine 479, and cysteine 483. Siroheme is bound at residue cysteine 483.

The protein belongs to the nitrite and sulfite reductase 4Fe-4S domain family. In terms of assembly, alpha(8)-beta(8). The alpha component is a flavoprotein, the beta component is a hemoprotein. It depends on siroheme as a cofactor. [4Fe-4S] cluster is required as a cofactor.

It carries out the reaction hydrogen sulfide + 3 NADP(+) + 3 H2O = sulfite + 3 NADPH + 4 H(+). It functions in the pathway sulfur metabolism; hydrogen sulfide biosynthesis; hydrogen sulfide from sulfite (NADPH route): step 1/1. Functionally, component of the sulfite reductase complex that catalyzes the 6-electron reduction of sulfite to sulfide. This is one of several activities required for the biosynthesis of L-cysteine from sulfate. This is Sulfite reductase [NADPH] hemoprotein beta-component from Staphylococcus carnosus (strain TM300).